A 162-amino-acid polypeptide reads, in one-letter code: Transcription elongation factor GreA (162 aa).

The stretch at 45 to 74 (ENAEYEAAREKQAFIEGRIKELEDMTARAE) forms a coiled coil.

The protein belongs to the GreA/GreB family.

In terms of biological role, necessary for efficient RNA polymerase transcription elongation past template-encoded arresting sites. The arresting sites in DNA have the property of trapping a certain fraction of elongating RNA polymerases that pass through, resulting in locked ternary complexes. Cleavage of the nascent transcript by cleavage factors such as GreA or GreB allows the resumption of elongation from the new 3'terminus. GreA releases sequences of 2 to 3 nucleotides. In Rickettsia prowazekii (strain Madrid E), this protein is Transcription elongation factor GreA.